The sequence spans 473 residues: UDP-N-acetylmuramoylalanine--D-glutamate ligase (473 aa).

120-126 (GSNGKTT) provides a ligand contact to ATP.

It belongs to the MurCDEF family.

It localises to the cytoplasm. The enzyme catalyses UDP-N-acetyl-alpha-D-muramoyl-L-alanine + D-glutamate + ATP = UDP-N-acetyl-alpha-D-muramoyl-L-alanyl-D-glutamate + ADP + phosphate + H(+). Its pathway is cell wall biogenesis; peptidoglycan biosynthesis. In terms of biological role, cell wall formation. Catalyzes the addition of glutamate to the nucleotide precursor UDP-N-acetylmuramoyl-L-alanine (UMA). The sequence is that of UDP-N-acetylmuramoylalanine--D-glutamate ligase from Nitrosospira multiformis (strain ATCC 25196 / NCIMB 11849 / C 71).